The chain runs to 437 residues: ATP-dependent RNA helicase SUB2 (437 aa).

The segment covering 1-19 (MSHEAEEDLLEYSDNEQEV) has biased composition (acidic residues). The tract at residues 1–45 (MSHEAEEDLLEYSDNEQEVQVDNKATEVNAEGNGESQAKDSDKKG) is disordered. The Q motif signature appears at 53 to 81 (TGFKDFLLKPELSRAIIDCGFEHPSEVQQ). Positions 84–259 (IPQSIHGTDV…RRFLQNPLEI (176 aa)) constitute a Helicase ATP-binding domain. 97 to 104 (AKSGLGKT) contributes to the ATP binding site. A DECD box motif is present at residues 206 to 209 (DECD). The region spanning 287 to 432 (KLAQLLDDLE…EFPEEGVDPS (146 aa)) is the Helicase C-terminal domain.

This sequence belongs to the DEAD box helicase family. DECD subfamily.

It localises to the nucleus. The enzyme catalyses ATP + H2O = ADP + phosphate + H(+). ATP-binding RNA helicase involved in transcription elongation and required for the export of mRNA out of the nucleus. SUB2 also plays a role in pre-mRNA splicing and spliceosome assembly. May be involved in rDNA and telomeric silencing, and maintenance of genome integrity. This is ATP-dependent RNA helicase SUB2 (SUB2) from Kluyveromyces lactis (strain ATCC 8585 / CBS 2359 / DSM 70799 / NBRC 1267 / NRRL Y-1140 / WM37) (Yeast).